A 127-amino-acid polypeptide reads, in one-letter code: uncharacterized protein (127 aa).

One can recognise a VOC domain in the interval 1–127; sequence MKIVVTSIFV…CGNLIQIVQK (127 aa).

The protein belongs to the glyoxalase I family.

This is an uncharacterized protein from Bacillus subtilis (strain 168).